Consider the following 182-residue polypeptide: Endoribonuclease YbeY (182 aa).

3 residues coordinate Zn(2+): His115, His119, and His125.

It belongs to the endoribonuclease YbeY family. Zn(2+) is required as a cofactor.

The protein resides in the cytoplasm. Its function is as follows. Single strand-specific metallo-endoribonuclease involved in late-stage 70S ribosome quality control and in maturation of the 3' terminus of the 16S rRNA. This chain is Endoribonuclease YbeY, found in Bifidobacterium longum subsp. infantis (strain ATCC 15697 / DSM 20088 / JCM 1222 / NCTC 11817 / S12).